The chain runs to 227 residues: Protein FAM3C (227 aa).

Residues 1–24 (MRVAGAAKLVVAVAVFLLTFYVIS) form the signal peptide. Disulfide bonds link Cys-58–Cys-86 and Cys-64–Cys-221. The GG-type lectin domain occupies 67 to 225 (KHFAFKMASG…VEMEGCIPQK (159 aa)).

It belongs to the FAM3 family. As to expression, present in most secretory epithelia (at protein level).

The protein resides in the secreted. It is found in the cytoplasmic vesicle. Its function is as follows. May be involved in retinal laminar formation. Promotes epithelial to mesenchymal transition. The sequence is that of Protein FAM3C (FAM3C) from Homo sapiens (Human).